Here is a 191-residue protein sequence, read N- to C-terminus: MVRKYRKAKGIVEAGVSSTYMQLRSRRIVYVRSEKSSSVSVVGDNGVSSSCSGSNEYKKKELIHLEEEDKDGDTETSTYRRGTKRKLFENLREEEKEELSKSMENYSSEFESAVKESLDCCCSGRKTMEETVTAEEEEKAKLMTEMPTESEIEDFFVEAEKQLKEKFKKKYNFDFEKEKPLEGRYEWVKLE.

The interval 62-81 is disordered; the sequence is LIHLEEEDKDGDTETSTYRR. The segment at 162 to 191 is required for inhibitory function and interaction with CDK kinase complexes; that stretch reads QLKEKFKKKYNFDFEKEKPLEGRYEWVKLE.

It belongs to the CDI family. ICK/KRP subfamily. Specifically interacts with CDKA-1, but not with CDKB1-1. Interacts with CYCD2-1 and CYCD3-1. In terms of processing, ubiquitinated independently by RKP and SCF (SKP1-CUL1-FBL5/SKP2B) protein ligase complex, leading to proteasomal degradation. In terms of tissue distribution, expressed at low levels in roots, stems, leaves and flowers.

It is found in the nucleus. It localises to the nucleoplasm. Functionally, binds and inhibits CYCD2-1/CDKA-1 kinase complex activity. Regulates cell division which is crucial for plant growth, development and morphogenesis. Functions in turning cells from a mitotic to an endoreplicating cell cycle mode. Acts cell- and non-cell-autonomously to regulate endoreduplication by allowing S phase progression, but blocking entry into mitosis. Keeps on the one hand the plant cell cycle locally controlled, and on the other hand provides a possibility of linking cell cycle control in single cells with the supracellular organization of a tissue or an organ. May target specifically CDKA-1. In Arabidopsis thaliana (Mouse-ear cress), this protein is Cyclin-dependent kinase inhibitor 1 (KRP1).